Here is a 157-residue protein sequence, read N- to C-terminus: Putative pre-16S rRNA nuclease (157 aa).

The protein belongs to the YqgF nuclease family.

Its subcellular location is the cytoplasm. Could be a nuclease involved in processing of the 5'-end of pre-16S rRNA. The sequence is that of Putative pre-16S rRNA nuclease from Ruegeria sp. (strain TM1040) (Silicibacter sp.).